The chain runs to 799 residues: Oxygen sensor protein DosP (799 aa).

The PAS 1 domain occupies 10–81; the sequence is ADGIFFPALE…YIRHNREGGK (72 aa). 2 residues coordinate heme: histidine 69 and methionine 87. The PAS 2 domain maps to 134 to 207; the sequence is QTRQLIIAVD…LQQLLWKTAR (74 aa). The 53-residue stretch at 208–260 folds into the PAC domain; the sequence is DQDEFLLLTRTGEKIWIKASISPVYDVLAHLQNLVMTFSDITEERQIRQLEGN. The 131-residue stretch at 402-532 folds into the GGDEF domain; the sequence is VSPVVYLIGV…GGNGWQFFSP (131 aa). An EAL domain is found at 541-795; the sequence is RLVLGAALKE…EIPGWMSSVL (255 aa).

As to quaternary structure, homodimer; has been previously suggested to be a homotetramer based on size exclusion chromatography. Forms a complex with DosC. Heme is required as a cofactor. The cofactor is Mg(2+). The heme distal ligand is coordinated by Met-87 in the active Fe(2+) (ferrous) form, by O(2) in the O(2)-bound form and by H(2)O in the inactive Fe(3+) (ferric) form.

It carries out the reaction 3',3'-c-di-GMP + H2O = 5'-phosphoguanylyl(3'-&gt;5')guanosine + H(+). Its activity is regulated as follows. Has c-di-GMP PDE activity in both Fe(2+) and Fe(3+)-bound forms; this activity is increased 6-7 fold by binding of O(2) and CO and NO. Has cAMP PDE activity only when the heme is in the Fe(2+) form. cAMP PDE activity is inhibited by oxidation of the heme iron and by binding of external ligands such as CO and NO. Also strongly inhibited by etazolate hydrochloride, a selective cAMP PDE inhibitor. PDE activity is inhibited in the absence of oxygen. Functionally, heme-based oxygen sensor protein displaying phosphodiesterase (PDE) activity toward c-di-GMP in response to oxygen availability. Involved in the modulation of intracellular c-di-GMP levels, in association with DosC which catalyzes the biosynthesis of c-di-GMP (diguanylate cyclase activity). Cyclic-di-GMP is a second messenger which controls cell surface-associated traits in bacteria. Has very poor PDE activity on cAMP but is not active with cGMP, bis(p-nitrophenyl) phosphate or p-nitrophenyl phosphate. Via its PDE activity on c-di-GMP, DosP regulates biofilm formation through the repression of transcription of the csgBAC operon, which encodes curli structural subunits. The sequence is that of Oxygen sensor protein DosP (dosP) from Escherichia coli (strain K12).